The sequence spans 663 residues: MTMVEHYPFKIHSDFEPQGDQPQAIKEIVDGIKAGKRHQTLLGATGTGKTFTMSNVIKEVGKPTLIIAHNKTLAGQLYSEFKEFFPENRVEYFVSYYDYYQPEAYVPSTDTFIEKDASINDEIDQLRHSATSALFERDDVIIIASVSCIYGLGNPEEYKDLVVSVRVGMEMDRSELLRKLVDVQYTRNDIDFQRGTFRVRGDVVEIFPASKEELCIRVEFFGDEIDRIREVNYLTGEVLKEREHFAIFPASHFVTREEKLKVAIERIEKELEERLKELRDENKLLEAQRLEQRTNYDLEMMREMGFCSGIENYSVHLTLRPLGSTPYTLLDYFGDDWLVMIDESHVTLPQVRGMYNGDRARKQVLVDHGFRLPSALDNRPLKFEEFEEKTKQLVYVSATPGPYEIEHTDKMVEQIIRPTGLLDPKIEVRPTENQIDDLLSEIQTRVERNERVLVTTLTKKMSEDLTTYMKEAGIKVNYLHSEIKTLERIEIIRDLRMGTYDVIVGINLLREGIDIPEVSLVVILDADKEGFLRSNRSLIQTIGRAARNDKGEVIMYADKMTDSMKYAIDETQRRREIQMKHNEKHGITPKTINKKIHDLISATVENDENNDKAQTVIPKKMTKKERQKTIDNIEKEMKQAAKDLDFEKATELRDMLFELKAEG.

The Helicase ATP-binding domain maps to aspartate 30 to arginine 417. Glycine 43–threonine 50 contacts ATP. A Beta-hairpin motif is present at residues tyrosine 96–isoleucine 119. A Helicase C-terminal domain is found at glutamine 434 to isoleucine 600. Residues glutamine 627 to glutamate 662 enclose the UVR domain.

Belongs to the UvrB family. Forms a heterotetramer with UvrA during the search for lesions. Interacts with UvrC in an incision complex.

It localises to the cytoplasm. Its function is as follows. The UvrABC repair system catalyzes the recognition and processing of DNA lesions. A damage recognition complex composed of 2 UvrA and 2 UvrB subunits scans DNA for abnormalities. Upon binding of the UvrA(2)B(2) complex to a putative damaged site, the DNA wraps around one UvrB monomer. DNA wrap is dependent on ATP binding by UvrB and probably causes local melting of the DNA helix, facilitating insertion of UvrB beta-hairpin between the DNA strands. Then UvrB probes one DNA strand for the presence of a lesion. If a lesion is found the UvrA subunits dissociate and the UvrB-DNA preincision complex is formed. This complex is subsequently bound by UvrC and the second UvrB is released. If no lesion is found, the DNA wraps around the other UvrB subunit that will check the other stand for damage. The polypeptide is UvrABC system protein B (Staphylococcus aureus (strain Mu50 / ATCC 700699)).